We begin with the raw amino-acid sequence, 193 residues long: Large ribosomal subunit protein uL18 (193 aa).

The protein belongs to the universal ribosomal protein uL18 family. Part of the 50S ribosomal subunit. Contacts the 5S and 23S rRNAs.

This is one of the proteins that bind and probably mediate the attachment of the 5S RNA into the large ribosomal subunit, where it forms part of the central protuberance. The chain is Large ribosomal subunit protein uL18 from Methanosphaera stadtmanae (strain ATCC 43021 / DSM 3091 / JCM 11832 / MCB-3).